A 263-amino-acid polypeptide reads, in one-letter code: Type-2Bb cytolytic delta-endotoxin (263 aa).

Belongs to the cyt1/cyt2 endotoxin family. In terms of processing, active after proteolytic processing.

Functionally, kills the larvae of dipteran insects by making pores in the epithelial cell membrane of the insect midgut. This Bacillus thuringiensis subsp. jegathesan protein is Type-2Bb cytolytic delta-endotoxin (cyt2Bb1).